The chain runs to 452 residues: MSGEEKEKVKILHVANISTSATRDHIYNMFNYLGKIQDLKVYPSEGNITANTLLKTAFIKFDDERCVEVAQHLTNTVVIDCAIVCLPYPNPVIPDEESFFNSGGSTTAGQRQLPPHVTNKIQESDDGSALLITVDPTLEQLGLPAYPPLPADTDSAKVEEIRRTVYVGNLPKGVDGNEVLELFNMYFGEVMYARMASGPDALPCAYAYVEFSQQASVCNALQNDGFEFKERPLKIQHSRVAIIKPQAKTDEQALGEIEEAIRMGRNGDDRDRRRSRSPRRRRSPSPRRRRDSRDRDRDRDRDRRRSRDRRSRSRDRDRDRDRKRSRSRDRKRRSRSRDNKDRDRKRSRSRDRRRRSKSRDRKRERSRSRSKDRKRDKKRSRSRSPEKRRDKEDRKTEKKENENESSLREKLLEKKAARKDSSDDEWEEKPTPTNGEVKNEEIGNGDVVMASE.

RRM domains follow at residues 10-91 (KILH…YPNP) and 163-240 (RTVY…HSRV). The segment at 258–452 (EEAIRMGRNG…GNGDVVMASE (195 aa)) is disordered. Residues 259-272 (EAIRMGRNGDDRDR) are compositionally biased toward basic and acidic residues. The segment covering 273 to 290 (RRSRSPRRRRSPSPRRRR) has biased composition (basic residues). Residues 291–305 (DSRDRDRDRDRDRRR) are compositionally biased toward basic and acidic residues. Basic residues-rich tracts occupy residues 323 to 335 (KRSR…RRSR), 345 to 360 (KRSR…KSRD), and 370 to 382 (SKDR…RSRS). The segment covering 383–421 (RSPEKRRDKEDRKTEKKENENESSLREKLLEKKAARKDS) has biased composition (basic and acidic residues).

This sequence belongs to the splicing factor SR family. In terms of processing, extensively phosphorylated on serine residues in the RS domain.

It is found in the nucleus. This is Probable splicing factor, arginine/serine-rich 7 (rsp-7) from Caenorhabditis elegans.